Here is a 106-residue protein sequence, read N- to C-terminus: Insulin-like peptide 03 (106 aa).

The signal sequence occupies residues 1–18 (MLFYFGLAVIFLIDSSQT). Residues 19–34 (QTLYKVNEVGGSQVDR) constitute a propeptide that is removed on maturation. Disulfide bonds link Cys37/Cys93, Cys49/Cys106, and Cys92/Cys97. A propeptide spans 52–82 (KKRQNIPRKYGRDPNNILEKEEFAKRFLRVR) (c peptide).

It belongs to the insulin family.

Its subcellular location is the secreted. Insulin decreases blood glucose concentration. May have evolved to activate insulin receptors (INSR) in vertebrates. Molecular docking studies reveals unique interaction with the human insulin receptor. In vivo, insulin-like peptide injection reduces blood glucose levels in two models of zebrafish diabetes (streptozotocin- and glucose-induced). Also shorter swimming distance of zebrafish larvae, an effect which is not observed with human insulin. This chain is Insulin-like peptide 03, found in Exaiptasia diaphana (Tropical sea anemone).